The chain runs to 360 residues: Pyrimidine monooxygenase RutA (360 aa).

Residues 49–50, N115, E124, 140–141, and S190 each bind FMN; these read IK and RY.

This sequence belongs to the NtaA/SnaA/DszA monooxygenase family. RutA subfamily.

The catalysed reaction is uracil + FMNH2 + NADH + O2 = (Z)-3-ureidoacrylate + FMN + NAD(+) + H2O + H(+). The enzyme catalyses thymine + FMNH2 + NADH + O2 = (Z)-2-methylureidoacrylate + FMN + NAD(+) + H2O + H(+). Functionally, catalyzes the pyrimidine ring opening between N-3 and C-4 by an unusual flavin hydroperoxide-catalyzed mechanism, adding oxygen atoms in the process to yield ureidoacrylate peracid, that immediately reacts with FMN forming ureidoacrylate and FMN-N(5)-oxide. The FMN-N(5)-oxide reacts spontaneously with NADH to produce FMN. Requires the flavin reductase RutF to regenerate FMN in vivo. This Pseudomonas syringae pv. syringae (strain B728a) protein is Pyrimidine monooxygenase RutA.